The following is a 1189-amino-acid chain: Magnesium-chelatase subunit H (1189 aa).

The protein belongs to the Mg-chelatase subunit H family.

The catalysed reaction is protoporphyrin IX + Mg(2+) + ATP + H2O = Mg-protoporphyrin IX + ADP + phosphate + 3 H(+). It functions in the pathway porphyrin-containing compound metabolism; bacteriochlorophyll biosynthesis (light-independent). In terms of biological role, involved in bacteriochlorophyll pigment biosynthesis; introduces a magnesium ion into protoporphyrin IX to yield Mg-protoroporphyrin IX. The sequence is that of Magnesium-chelatase subunit H (bchH) from Rhodobacter capsulatus (strain ATCC BAA-309 / NBRC 16581 / SB1003).